Here is a 392-residue protein sequence, read N- to C-terminus: Probable protein phosphatase 2C 78 (392 aa).

Residues 39 to 342 (ASGEYSIAVA…DDITVVVVYL (304 aa)) enclose the PPM-type phosphatase domain. Residues Asp73, Gly74, Asp274, and Asp333 each coordinate Mn(2+).

This sequence belongs to the PP2C family. Mg(2+) is required as a cofactor. It depends on Mn(2+) as a cofactor.

The enzyme catalyses O-phospho-L-seryl-[protein] + H2O = L-seryl-[protein] + phosphate. It catalyses the reaction O-phospho-L-threonyl-[protein] + H2O = L-threonyl-[protein] + phosphate. The polypeptide is Probable protein phosphatase 2C 78 (Oryza sativa subsp. japonica (Rice)).